Consider the following 222-residue polypeptide: uncharacterized protein (222 aa).

Residues 142–222 are disordered; the sequence is ARRGGCVHPP…LPDPPSAGHL (81 aa). Residues 160-169 are compositionally biased toward low complexity; the sequence is QSRSISSRRA. Residues 182–196 are compositionally biased toward basic residues; sequence PRRRPHRHRTRPQTR.

This sequence belongs to the Rv1128c/1148c/1588c/1702c/1945/3466 family.

This is an uncharacterized protein from Mycobacterium tuberculosis (strain ATCC 25618 / H37Rv).